Consider the following 855-residue polypeptide: MITAIAKKIFGTRNDKEIKKYFKRVALINALEGKYSNLSDDELKSEFSKLKVDLLSKKVTKDDILNDVFAIVREVSKRTLNMRHFDVQLIGGMVLNDGRIAEMKTGEGKTLVATLPVVLNAMDEKGVHVVTVNDYLAKRDATQMSEIYNFLGLSVGVILSGEYDDEKRKIAYNSDITYGTNNEFGFDYLRDNMKFEVGQKVQREHNFVIVDEVDSILIDEARTPLIISGPTNRTLDGYIQADVVAKQLVRGEAADPRVPNSKATGDFVVDEKNRTIMITEAGIAKAEKLFGVDNLYNLENAILSHHLDQALKAHNLFEKDVHYVVRDSQVIIVDEFTGRLSEGRRFSEGLHQALEAKEGVKIQEESQTLADITFQNYFRMYSRLSGMTGTAQTEATEFSQIYKLEVISIPTNVPIKRVDRDDLIYKTENEKFKAVIEEIKRSNIKGQPVLVGTASIEKSEIFHKMLVKEKIAHSVLNAKNHEKEAEIIAQAGAKGAVTIATNMAGRGVDIRIDDEVRELGGLYIIGTERHESRRIDNQLRGRAGRQGDPGLSRFYLSLEDSLLRIFGSDKIKAIMDRLGIEEGESIESRLVTRAVENAQKKVESLHFESRKHILEYDDVANEQRKTVYKYRDELLNPDYDLKDKIISNRQDFVKTLLDEVNIFDGGLGDEFDISRLCEVVYGESGTKIDEDEIKGLDYHSLADKVIDKLAKDYDEKMSVIDDEQRKNIEKVLYLQVLDGAWREHLYQMDILKTGIGLRGYNQKDPLTEYKKESYNLFMELVNRLKNESIKTLQIVRFKTEDDENTDRALEKMQDEANLQNKFEKKPARNEPCPCGSGKKYKDCCGKSGPKKGVFA.

Residues glutamine 88, 106 to 110 (GEGKT), and aspartate 509 contribute to the ATP site. The segment at 815 to 837 (EANLQNKFEKKPARNEPCPCGSG) is disordered. Zn(2+) is bound by residues cysteine 832, cysteine 834, cysteine 843, and cysteine 844.

The protein belongs to the SecA family. Monomer and homodimer. Part of the essential Sec protein translocation apparatus which comprises SecA, SecYEG and auxiliary proteins SecDF-YajC and YidC. It depends on Zn(2+) as a cofactor.

The protein resides in the cell inner membrane. It is found in the cytoplasm. It carries out the reaction ATP + H2O + cellular proteinSide 1 = ADP + phosphate + cellular proteinSide 2.. Its function is as follows. Part of the Sec protein translocase complex. Interacts with the SecYEG preprotein conducting channel. Has a central role in coupling the hydrolysis of ATP to the transfer of proteins into and across the cell membrane, serving as an ATP-driven molecular motor driving the stepwise translocation of polypeptide chains across the membrane. The chain is Protein translocase subunit SecA from Campylobacter fetus subsp. fetus (strain 82-40).